The following is a 152-amino-acid chain: Large ribosomal subunit protein uL15 (152 aa).

The tract at residues 1–57 (MTSTLNTLKSNSGSRKKKLRKGRGIAAGQGASCGFGMRGQKSRSGRPTRPGFEGGQM) is disordered. The span at 14 to 23 (SRKKKLRKGR) shows a compositional bias: basic residues. Positions 25-37 (IAAGQGASCGFGM) are enriched in gly residues.

The protein belongs to the universal ribosomal protein uL15 family. As to quaternary structure, part of the 50S ribosomal subunit.

Binds to the 23S rRNA. The sequence is that of Large ribosomal subunit protein uL15 from Prochlorococcus marinus (strain MIT 9312).